We begin with the raw amino-acid sequence, 137 residues long: Large ribosomal subunit protein uL16 (137 aa).

This sequence belongs to the universal ribosomal protein uL16 family. In terms of assembly, part of the 50S ribosomal subunit.

In terms of biological role, binds 23S rRNA and is also seen to make contacts with the A and possibly P site tRNAs. This is Large ribosomal subunit protein uL16 from Stutzerimonas stutzeri (strain A1501) (Pseudomonas stutzeri).